We begin with the raw amino-acid sequence, 367 residues long: MKITAINVFQVDLPLREGRYSWSNGNFVEVFDSTVVEIETDEGLKGYAECCPLGSAYLPSYALGVRSGLQELAPHLIGKDPLNIGEINRVMDAALRGHPYAKAPIDIACWDLLGKATGQPLYTLLGGAAQDDVALYRAISQEAPEIMAKKIEGYAAEGYTKFQLKVGGDANDDINRIHATRSVLKKSDLLVADANTGWTRHEAARVVGAVSSLDVYIEQPCLTYEESVSIRRRTALPFVLDEVIDGPNTLVRGIAEDAMDCINLKISKVGGLTKAKLMRDLCIAHGIPMTIEDTWGGDIVTAAIAHLARSTPSEFTFSATDFNSYGTVDIAEGAPKRVNGRMTTSDLPGLGITPIFDVLGEPVARYS.

Lys-165 (proton donor/acceptor) is an active-site residue. Residues Asp-193, Glu-218, and Asp-241 each contribute to the Mg(2+) site. The active-site Proton donor/acceptor is Lys-265.

The protein belongs to the mandelate racemase/muconate lactonizing enzyme family. Requires Mg(2+) as cofactor.

The catalysed reaction is cis-3-hydroxy-L-proline = 1-pyrroline-2-carboxylate + H2O. Catalyzes the dehydration of cis-3-hydroxy-L-proline (c3LHyp) to Delta(1)-pyrroline-2-carboxylate (Pyr2C). Is likely involved in a degradation pathway that converts c3LHyp to L-proline, which allows L.aggregata to grow on c3LHyp as a sole carbon source. Also catalyzes the epimerization of c3LHyp to trans-3-hydroxy-D-proline (t3DHyp), a competing reaction occurring from the same enolate anion intermediate. L-proline, t3LHyp, t4LHyp, c4DHyp and their methylated derivatives are not substrates. This is Cis-3-hydroxy-L-proline dehydratase from Roseibium aggregatum (strain ATCC 25650 / DSM 13394 / JCM 20685 / NBRC 16684 / NCIMB 2208 / IAM 12614 / B1) (Stappia aggregata).